The primary structure comprises 221 residues: Large ribosomal subunit protein uL3 (221 aa).

Residues 131 to 165 are disordered; it reads HNQSRGPETHGSRHHRRPGSMGPIKGKIKGKKLPG.

Belongs to the universal ribosomal protein uL3 family. As to quaternary structure, part of the 50S ribosomal subunit. Forms a cluster with proteins L14 and L19.

One of the primary rRNA binding proteins, it binds directly near the 3'-end of the 23S rRNA, where it nucleates assembly of the 50S subunit. The chain is Large ribosomal subunit protein uL3 from Phytoplasma australiense.